Reading from the N-terminus, the 349-residue chain is Ferredoxin--NADP reductase 3 (349 aa).

The FAD site is built by Glu34, Lys42, Tyr46, Val86, Ile120, Asp287, and Ser328.

Belongs to the ferredoxin--NADP reductase type 2 family. In terms of assembly, homodimer. FAD is required as a cofactor.

It carries out the reaction 2 reduced [2Fe-2S]-[ferredoxin] + NADP(+) + H(+) = 2 oxidized [2Fe-2S]-[ferredoxin] + NADPH. The protein is Ferredoxin--NADP reductase 3 of Lysinibacillus sphaericus (strain C3-41).